A 262-amino-acid polypeptide reads, in one-letter code: MQALRTAASGMAAQQLNVEVISNNIANMNTVGFKRQRAEFQDLLYQTIERAGSQSSSDGNIVPTGVQVGGGVKAGSVYRITEQGTPTLTDSPLDLAIQGKGYMPILLPSGETAYTRAGNFSTNDQGQIVTEDGYLVQPGITIPQNATDITISKSGLVQVKLDGQPQPQTVGQIQLANFLNEGGLEAIGDNLFLETAASGAATLAAPGEPGFGMLLQHYTEASNVDAVSEITALITAQRAYEMNSKVISTADQMLQATSQLRS.

This sequence belongs to the flagella basal body rod proteins family. The basal body constitutes a major portion of the flagellar organelle and consists of four rings (L,P,S, and M) mounted on a central rod. The rod consists of about 26 subunits of FlgG in the distal portion, and FlgB, FlgC and FlgF are thought to build up the proximal portion of the rod with about 6 subunits each.

It is found in the bacterial flagellum basal body. The sequence is that of Flagellar basal-body rod protein FlgG (flgG) from Caulobacter vibrioides (strain ATCC 19089 / CIP 103742 / CB 15) (Caulobacter crescentus).